A 311-amino-acid chain; its full sequence is MSQNQEISKKEQYNLNKLQKRLRRNVGEAIADFNMIEEGDRIMVCLSGGKDSYTMLEILRNLQQSAPINFSLVAVNLDQKQPGFPEHVLPEYLEKLGVEYKIVEENTYGIVKEKIPEGKTTCSLCSRLRRGILYRTATELGATKIALGHHRDDILQTLFLNMFYGGKMKGMPPKLMSDDGKHIVIRPLAYCREKDIQRFADAKAFPIIPCNLCGSQPNLQRQVIADMLRDWDKRYPGRIETMFSAMQNVVPSHLCDTNLFDFKGITHGSEVVNGGDLAFDREEIPLQPVGWQPEEDENQLDELRLNVVEVK.

A PP-loop motif motif is present at residues 47 to 52 (SGGKDS). 3 residues coordinate [4Fe-4S] cluster: Cys122, Cys125, and Cys213.

This sequence belongs to the TtcA family. As to quaternary structure, homodimer. Requires Mg(2+) as cofactor. It depends on [4Fe-4S] cluster as a cofactor.

The protein localises to the cytoplasm. The catalysed reaction is cytidine(32) in tRNA + S-sulfanyl-L-cysteinyl-[cysteine desulfurase] + AH2 + ATP = 2-thiocytidine(32) in tRNA + L-cysteinyl-[cysteine desulfurase] + A + AMP + diphosphate + H(+). Its pathway is tRNA modification. Catalyzes the ATP-dependent 2-thiolation of cytidine in position 32 of tRNA, to form 2-thiocytidine (s(2)C32). The sulfur atoms are provided by the cysteine/cysteine desulfurase (IscS) system. The protein is tRNA-cytidine(32) 2-sulfurtransferase of Escherichia coli (strain 55989 / EAEC).